Consider the following 557-residue polypeptide: NADP-dependent malic enzyme (557 aa).

Catalysis depends on Y88, which acts as the Proton donor. R141 contacts NADP(+). The active-site Proton acceptor is K159. The a divalent metal cation site is built by E231, D232, and D255. Residue D255 coordinates NADP(+). At S322 the chain carries Phosphoserine. Residue N394 participates in NADP(+) binding.

Belongs to the malic enzymes family. As to quaternary structure, homotetramer. It depends on Mg(2+) as a cofactor. Mn(2+) serves as cofactor.

The protein resides in the cytoplasm. It carries out the reaction (S)-malate + NADP(+) = pyruvate + CO2 + NADPH. The catalysed reaction is oxaloacetate + H(+) = pyruvate + CO2. Catalyzes the oxidative decarboxylation of (S)-malate in the presence of NADP(+) and divalent metal ions, and decarboxylation of oxaloacetate. The chain is NADP-dependent malic enzyme (ME1) from Sus scrofa (Pig).